We begin with the raw amino-acid sequence, 726 residues long: tRNA endonuclease ANKZF1 (726 aa).

The interval 40-61 (LARAPRTSCSGSGERESPERKL) is disordered. Positions 52-61 (GERESPERKL) are enriched in basic and acidic residues. The segment at 72–96 (LFCSTCDQTFQNHQEQREHYKLDWH) adopts a C2H2-type zinc-finger fold. The segment covering 120–130 (STGDLSSISGS) has biased composition (low complexity). The interval 120-141 (STGDLSSISGSEDSDSASEEDL) is disordered. Residues 131 to 141 (EDSDSASEEDL) show a composition bias toward acidic residues. In terms of domain architecture, VLRF1 spans 203–346 (GPRDCVVLMA…QRVLHKLTTL (144 aa)). Glutamine 246 is an active-site residue. Residues serine 258, serine 361, and serine 398 each carry the phosphoserine modification. Disordered stretches follow at residues 387 to 409 (DEKE…EGED) and 436 to 474 (RRRR…SSQA). A compositionally biased stretch (basic residues) spans 436–445 (RRRRKRNKKE). The segment covering 457-473 (TLLQQTQEEEPSTQSSQ) has biased composition (low complexity). The ANK 1 repeat unit spans residues 493-526 (ELWNALLAACRAGDVGVLKLQLAPSPADPRVLSL). Serine 533 carries the post-translational modification Phosphoserine. The ANK 2 repeat unit spans residues 534 to 563 (GGFTLLHAAAAAGRGSVVRLLLEAGADPTV). Residues 588-656 (MEKNPDAYDY…RRFAALSDRE (69 aa)) are disordered. Residue threonine 607 is modified to Phosphothreonine. A coiled-coil region spans residues 609–659 (EMEARQATRKREQKAARRQREEQQQRQQEQEEREREEQRRFAALSDREKRA). Residues 610–656 (MEARQATRKREQKAARRQREEQQQRQQEQEEREREEQRRFAALSDRE) show a composition bias toward basic and acidic residues. The tract at residues 654–666 (DREKRALAAERRL) is VCP/p97-interacting motif (VIM). Phosphoserine occurs at positions 675 and 680.

This sequence belongs to the ANKZF1/VMS1 family. In terms of assembly, interacts (via VIM motif) with VCP.

Its subcellular location is the cytoplasm. In terms of biological role, endonuclease that cleaves polypeptidyl-tRNAs downstream of the ribosome-associated quality control (RQC) pathway to release incompletely synthesized polypeptides for degradation. The RQC pathway disassembles aberrantly stalled translation complexes to recycle or degrade the constituent parts. ANKZF1 acts downstream disassembly of stalled ribosomes and specifically cleaves off the terminal 3'-CCA nucleotides universal to all tRNAs from polypeptidyl-tRNAs, releasing (1) ubiquitinated polypeptides from 60S ribosomal subunit for degradation and (2) cleaved tRNAs. ANKZF1-cleaved tRNAs are then repaired and recycled by ELAC1 and TRNT1. Also plays a role in the cellular response to hydrogen peroxide and in the maintenance of mitochondrial integrity under conditions of cellular stress. The sequence is that of tRNA endonuclease ANKZF1 from Homo sapiens (Human).